The sequence spans 143 residues: MQEIEIFCDGSSLGNPGPGGYAAILRYKDKEKIISGGEKFTTNNRMELRALNEALKILKRPCHITLYSDSQYVCQAINVWLIGWQKKNFAKVKNVDLWKEFLEVSKGHSIVAIWIKGHNGHAQNERCDSLAKLEAQKWVKTTT.

One can recognise an RNase H type-1 domain in the interval 1-136 (MQEIEIFCDG…CDSLAKLEAQ (136 aa)). The Mg(2+) site is built by Asp9, Glu47, Asp69, and Asp128.

The protein belongs to the RNase H family. In terms of assembly, monomer. It depends on Mg(2+) as a cofactor.

It is found in the cytoplasm. It catalyses the reaction Endonucleolytic cleavage to 5'-phosphomonoester.. In terms of biological role, endonuclease that specifically degrades the RNA of RNA-DNA hybrids. This chain is Ribonuclease H, found in Helicobacter acinonychis (strain Sheeba).